Here is a 222-residue protein sequence, read N- to C-terminus: Ribosomal RNA small subunit methyltransferase G (222 aa).

S-adenosyl-L-methionine contacts are provided by residues Gly-73, Leu-78, 124 to 125 (AE), and Arg-137.

Belongs to the methyltransferase superfamily. RNA methyltransferase RsmG family.

The protein localises to the cytoplasm. Functionally, specifically methylates the N7 position of guanine in position 518 of 16S rRNA. The polypeptide is Ribosomal RNA small subunit methyltransferase G (Acidothermus cellulolyticus (strain ATCC 43068 / DSM 8971 / 11B)).